The primary structure comprises 442 residues: DDB1- and CUL4-associated factor 12-B (442 aa).

Residues 1 to 13 show a composition bias toward basic residues; that stretch reads MTRRPVSRKRRAT. Residues 1-31 form a disordered region; that stretch reads MTRRPVSRKRRATHGTGPGEQSDWDHSAHKR. WD repeat units follow at residues 132–173, 177–215, 245–284, and 333–370; these read SHQS…PVCV, GHND…VNKR, PVNC…SKLL, and EQGS…FLED.

This sequence belongs to the WD repeat DCAF12 family. Component of the DCX(DCAF12) E3 ubiquitin ligase complex, at least composed of cul4 (cul4a or cul4b), ddb1, dcaf12 and rbx1.

The protein localises to the cytoplasm. It is found in the cytoskeleton. Its subcellular location is the microtubule organizing center. It localises to the centrosome. The protein resides in the nucleus. Its pathway is protein modification; protein ubiquitination. Substrate-recognition component of a DCX (DDB1-CUL4-X-box) E3 ubiquitin-protein ligase complex of the DesCEND (destruction via C-end degrons) pathway, which recognizes a C-degron located at the extreme C terminus of target proteins, leading to their ubiquitination and degradation. The C-degron recognized by the DesCEND pathway is usually a motif of less than ten residues and can be present in full-length proteins, truncated proteins or proteolytically cleaved forms. The DCX(DCAF12) complex specifically recognizes proteins with a diglutamate (Glu-Glu) at the C-terminus leading to their ubiquitination and degradation. Also directly recognizes the C-terminal glutamate-leucine (Glu-Leu) degron as an alternative degron in proteins leading to their ubiquitination and degradation. This is DDB1- and CUL4-associated factor 12-B (dcaf12-b) from Xenopus laevis (African clawed frog).